The following is a 485-amino-acid chain: MKLELVFIPSPGDGHLRPLVEVAKLHVDRDDHLSITIIIIPQMHGFSSSNSSSYIASLSSDSEERLSYNVLSVPDKPDSDDTKPHFFDYIDNFKPQVKATVEKLTDPGPPDSPSRLAGFVVDMFCMMMIDVANEFGVPSYMFYTSNATFLGLQVHVEYLYDVKNYDVSDLKDSDTTELEVPCLTRPLPVKCFPSVLLTKEWLPVMFRQTRRFRETKGILVNTFAELEPQAMKFFSGVDSPLPTVYTVGPVMNLKINGPNSSDDKQSEILRWLDEQPRKSVVFLCFGSMGGFREGQAKEIAIALERSGHRFVWSLRRAQPKGSIGPPEEFTNLEEILPEGFLERTAEIGKIVGWAPQSAILANPAIGGFVSHCGWNSTLESLWFGVPMATWPLYAEQQVNAFEMVEELGLAVEVRNSFRGDFMAADDELMTAEEIERGIRCLMEQDSDVRSRVKEMSEKSHVALMDGGSSHVALLKFIQDVTKNIS.

UDP-alpha-D-glucose contacts are provided by residues Ser287, 354-356 (APQ), 371-379 (HCGWNSTLE), and 393-396 (YAEQ).

It belongs to the UDP-glycosyltransferase family.

Functionally, glucosyltransferase that glucosylates the cell wall inhibitor hypostatin in vivo to form a bioactive glucoside. This chain is UDP-glycosyltransferase 71B2 (UGT71B2), found in Arabidopsis thaliana (Mouse-ear cress).